We begin with the raw amino-acid sequence, 415 residues long: NEDD8-specific protease 2 (415 aa).

A disordered region spans residues 1 to 42; the sequence is MRSNSIFTKEIDSEAVKKSSNLRPPSTGSSNSNGSDTASPKK. The span at 26–38 shows a compositional bias: low complexity; sequence STGSSNSNGSDTA. Ser-35 carries the post-translational modification Phosphoserine. Residues His-171, Asp-188, and Cys-229 contribute to the active site. Residues 320–415 are disordered; that stretch reads AVTSDSAQPH…QHTQQSIEIH (96 aa). Composition is skewed to polar residues over residues 335-368, 379-390, and 405-415; these read MPSS…NSSP, TASTSVLPTSIL, and IQHTQQSIEIH. Ser-367 carries the post-translational modification Phosphoserine.

This sequence belongs to the peptidase C48 family.

Its subcellular location is the cytoplasm. The protein resides in the nucleus. Its function is as follows. Protease that catalyzes two essential functions in the NEDD8 pathway: processing of full-length NEDD8 to its mature form and deconjugation of NEDD8 from targeted proteins such as the pcu1, pcu2 and pcu4 cullins and other proteins. Has a role in meiosis. This chain is NEDD8-specific protease 2 (nep2), found in Schizosaccharomyces pombe (strain 972 / ATCC 24843) (Fission yeast).